The following is a 223-amino-acid chain: Golgi to ER traffic protein 1 (223 aa).

Residue M1 is a topological domain, lumenal. A helical transmembrane segment spans residues 2–21 (SWVVAIAVVFVVVLKVLEYS). Topologically, residues 22 to 105 (TSYHDLVLQS…QIKGHLKKVK (84 aa)) are cytoplasmic. The stretch at 56-105 (ENKSISAQDNYAKWTKNNRKLDKLDKEITELGAQLKAHNEQIKGHLKKVK) forms a coiled coil. A helical membrane pass occupies residues 106 to 126 (LLLLTVPFLCFKLWKGKHIVY). Over 127–177 (NLPHHQMFPQLVAGVWSQGWLYLAILPLQLAKSIVTGSSFAIETASFPHMG) the chain is Lumenal. Residues 178–194 (VSLGIWLWALNSVISNI) form a helical membrane-spanning segment. The Cytoplasmic portion of the chain corresponds to 195 to 223 (EFMTMQLWAKPVSKPSKKLEIVTDEIKVD).

It belongs to the WRB/GET1 family. In terms of assembly, component of the Golgi to ER traffic (GET) complex, which is composed of GET1, GET2 and GET3. Within the complex, GET1 and GET2 form a heterotetramer which is stabilized by phosphatidylinositol binding and which binds to the GET3 homodimer.

Its subcellular location is the endoplasmic reticulum membrane. It localises to the golgi apparatus membrane. Required for the post-translational delivery of tail-anchored (TA) proteins to the endoplasmic reticulum. Together with GET2, acts as a membrane receptor for soluble GET3, which recognizes and selectively binds the transmembrane domain of TA proteins in the cytosol. The GET complex cooperates with the HDEL receptor ERD2 to mediate the ATP-dependent retrieval of resident ER proteins that contain a C-terminal H-D-E-L retention signal from the Golgi to the ER. This is Golgi to ER traffic protein 1 from Candida glabrata (strain ATCC 2001 / BCRC 20586 / JCM 3761 / NBRC 0622 / NRRL Y-65 / CBS 138) (Yeast).